The chain runs to 178 residues: Protein RICE FLOWERING LOCUS T 1 (178 aa).

Belongs to the phosphatidylethanolamine-binding protein family. Interacts with FTIP1. As to expression, expressed in leaf vascular tissues. Specifically expressed in the phloem including companion cells.

It is found in the cytoplasm. Its subcellular location is the nucleus. The protein localises to the endoplasmic reticulum. In terms of biological role, probable mobile flower-promoting signal (florigen) that moves from the leaf to the shoot apical meristem (SAM) and induces flowering. Promotes the transition from vegetative growth to flowering under long day (LD) conditions. Acts upstream of MADS14 and MADS15. May also participate in the promotion of flowering under short day (SD) conditions. The sequence is that of Protein RICE FLOWERING LOCUS T 1 from Oryza sativa subsp. japonica (Rice).